The chain runs to 212 residues: Large ribosomal subunit protein uL1 (212 aa).

This sequence belongs to the universal ribosomal protein uL1 family. As to quaternary structure, part of the 50S ribosomal subunit.

Binds directly to 23S rRNA. Probably involved in E site tRNA release. Functionally, protein L1 is also a translational repressor protein, it controls the translation of its operon by binding to its mRNA. The chain is Large ribosomal subunit protein uL1 from Methanobrevibacter smithii (strain ATCC 35061 / DSM 861 / OCM 144 / PS).